The sequence spans 120 residues: Glycine cleavage system H protein (120 aa).

Residues 17-99 form the Lipoyl-binding domain; sequence IATVGITAHA…RGAGWFFKLK (83 aa). Lysine 58 carries the post-translational modification N6-lipoyllysine.

It belongs to the GcvH family. The glycine cleavage system is composed of four proteins: P, T, L and H. (R)-lipoate serves as cofactor.

Functionally, the glycine cleavage system catalyzes the degradation of glycine. The H protein shuttles the methylamine group of glycine from the P protein to the T protein. The chain is Glycine cleavage system H protein from Allorhizobium ampelinum (strain ATCC BAA-846 / DSM 112012 / S4) (Agrobacterium vitis (strain S4)).